We begin with the raw amino-acid sequence, 119 residues long: Large ribosomal subunit protein bL19 (119 aa).

Belongs to the bacterial ribosomal protein bL19 family.

Its function is as follows. This protein is located at the 30S-50S ribosomal subunit interface and may play a role in the structure and function of the aminoacyl-tRNA binding site. This chain is Large ribosomal subunit protein bL19, found in Limosilactobacillus reuteri (strain DSM 20016) (Lactobacillus reuteri).